We begin with the raw amino-acid sequence, 262 residues long: Small ribosomal subunit protein eS4x (262 aa).

The S4 RNA-binding domain maps to L42–D104.

The protein belongs to the eukaryotic ribosomal protein eS4 family.

Its subcellular location is the cytoplasm. This is Small ribosomal subunit protein eS4x (RPS4D) from Arabidopsis thaliana (Mouse-ear cress).